A 232-amino-acid chain; its full sequence is Ribosomal RNA small subunit methyltransferase G (232 aa).

Residues Gly75, Phe80, 126–127 (AE), and Arg143 contribute to the S-adenosyl-L-methionine site.

It belongs to the methyltransferase superfamily. RNA methyltransferase RsmG family.

Its subcellular location is the cytoplasm. Functionally, specifically methylates the N7 position of a guanine in 16S rRNA. The sequence is that of Ribosomal RNA small subunit methyltransferase G from Fusobacterium nucleatum subsp. nucleatum (strain ATCC 25586 / DSM 15643 / BCRC 10681 / CIP 101130 / JCM 8532 / KCTC 2640 / LMG 13131 / VPI 4355).